The sequence spans 227 residues: MAYPFQLGFQDATSPIMEELLHFHDHTLMIVFLISSLVLYIITLMLTTKLTHTSTMDAQEVETVWTILPAIILILIALPSLRILYMMDEVNNPSLTVKTMGHQWYWSYEYTDYEDLSFDSYMIPTSDLKPGELRLLEVDNRVVLPMEMTIRMLVSSEDVLHSWAVPSLGLKTDAIPGRLNQTTLMSTRPGLFYGQCSEICGSNHSFMPIVLELVPLEFFEKWSASML.

Over 1-14 (MAYPFQLGFQDATS) the chain is Mitochondrial intermembrane. A helical transmembrane segment spans residues 15–45 (PIMEELLHFHDHTLMIVFLISSLVLYIITLM). The Mitochondrial matrix segment spans residues 46–59 (LTTKLTHTSTMDAQ). The chain crosses the membrane as a helical span at residues 60–87 (EVETVWTILPAIILILIALPSLRILYMM). At 88–227 (DEVNNPSLTV…FFEKWSASML (140 aa)) the chain is on the mitochondrial intermembrane side. The Cu cation site is built by H161, C196, E198, C200, H204, and M207. Position 198 (E198) interacts with Mg(2+).

It belongs to the cytochrome c oxidase subunit 2 family. In terms of assembly, component of the cytochrome c oxidase (complex IV, CIV), a multisubunit enzyme composed of 14 subunits. The complex is composed of a catalytic core of 3 subunits MT-CO1, MT-CO2 and MT-CO3, encoded in the mitochondrial DNA, and 11 supernumerary subunits COX4I, COX5A, COX5B, COX6A, COX6B, COX6C, COX7A, COX7B, COX7C, COX8 and NDUFA4, which are encoded in the nuclear genome. The complex exists as a monomer or a dimer and forms supercomplexes (SCs) in the inner mitochondrial membrane with NADH-ubiquinone oxidoreductase (complex I, CI) and ubiquinol-cytochrome c oxidoreductase (cytochrome b-c1 complex, complex III, CIII), resulting in different assemblies (supercomplex SCI(1)III(2)IV(1) and megacomplex MCI(2)III(2)IV(2)). Found in a complex with TMEM177, COA6, COX18, COX20, SCO1 and SCO2. Interacts with TMEM177 in a COX20-dependent manner. Interacts with COX20. Interacts with COX16. The cofactor is Cu cation.

The protein localises to the mitochondrion inner membrane. It carries out the reaction 4 Fe(II)-[cytochrome c] + O2 + 8 H(+)(in) = 4 Fe(III)-[cytochrome c] + 2 H2O + 4 H(+)(out). In terms of biological role, component of the cytochrome c oxidase, the last enzyme in the mitochondrial electron transport chain which drives oxidative phosphorylation. The respiratory chain contains 3 multisubunit complexes succinate dehydrogenase (complex II, CII), ubiquinol-cytochrome c oxidoreductase (cytochrome b-c1 complex, complex III, CIII) and cytochrome c oxidase (complex IV, CIV), that cooperate to transfer electrons derived from NADH and succinate to molecular oxygen, creating an electrochemical gradient over the inner membrane that drives transmembrane transport and the ATP synthase. Cytochrome c oxidase is the component of the respiratory chain that catalyzes the reduction of oxygen to water. Electrons originating from reduced cytochrome c in the intermembrane space (IMS) are transferred via the dinuclear copper A center (CU(A)) of subunit 2 and heme A of subunit 1 to the active site in subunit 1, a binuclear center (BNC) formed by heme A3 and copper B (CU(B)). The BNC reduces molecular oxygen to 2 water molecules using 4 electrons from cytochrome c in the IMS and 4 protons from the mitochondrial matrix. This is Cytochrome c oxidase subunit 2 (MT-CO2) from Balaenoptera musculus (Blue whale).